Here is a 333-residue protein sequence, read N- to C-terminus: 4-hydroxyproline 2-epimerase (333 aa).

Residue Cys-91 is the Proton acceptor of the active site. Substrate contacts are provided by residues 92–93 (GH), His-225, and Asp-250. Cys-254 serves as the catalytic Proton donor. 255 to 256 (GT) lines the substrate pocket.

It belongs to the proline racemase family.

The catalysed reaction is trans-4-hydroxy-L-proline = cis-4-hydroxy-D-proline. Catalyzes the epimerization of trans-4-hydroxy-L-proline (t4LHyp) to cis-4-hydroxy-D-proline (c4DHyp). Is likely involved in a degradation pathway that converts t4LHyp to alpha-ketoglutarate. Displays no proline racemase activity. This Streptosporangium roseum (strain ATCC 12428 / DSM 43021 / JCM 3005 / KCTC 9067 / NCIMB 10171 / NRRL 2505 / NI 9100) protein is 4-hydroxyproline 2-epimerase.